Reading from the N-terminus, the 132-residue chain is MTAGAGGSPPTRRCPATEDRAPATVATPSSADPTASRAVSWWSVHEHVAPVLDAAGSWPMAGTPAWRQLDDADPRKWAAICDAARHWALRVETCQEAMAQASRDVSAAADWPGIAREIVRRRGVYIPRAGVA.

Residues 1–34 form a disordered region; the sequence is MTAGAGGSPPTRRCPATEDRAPATVATPSSADPT.

The protein to M.tuberculosis Rv2656c.

This is an uncharacterized protein from Mycobacterium tuberculosis (strain CDC 1551 / Oshkosh).